Here is a 356-residue protein sequence, read N- to C-terminus: tRNA N6-adenosine threonylcarbamoyltransferase (356 aa).

Residues H114 and H118 each contribute to the Fe cation site. Substrate contacts are provided by residues 136–140, D169, G182, and N280; that span reads LVSGG. Position 308 (D308) interacts with Fe cation. Residues 333–356 form a disordered region; it reads ARPRWPLDNSQPALLGSGKKGAKA.

It belongs to the KAE1 / TsaD family. Fe(2+) serves as cofactor.

The protein localises to the cytoplasm. It catalyses the reaction L-threonylcarbamoyladenylate + adenosine(37) in tRNA = N(6)-L-threonylcarbamoyladenosine(37) in tRNA + AMP + H(+). Required for the formation of a threonylcarbamoyl group on adenosine at position 37 (t(6)A37) in tRNAs that read codons beginning with adenine. Is involved in the transfer of the threonylcarbamoyl moiety of threonylcarbamoyl-AMP (TC-AMP) to the N6 group of A37, together with TsaE and TsaB. TsaD likely plays a direct catalytic role in this reaction. The polypeptide is tRNA N6-adenosine threonylcarbamoyltransferase (Dinoroseobacter shibae (strain DSM 16493 / NCIMB 14021 / DFL 12)).